The chain runs to 455 residues: Probable alpha-galactosidase B (455 aa).

Positions 1 to 16 (MIEFLALITLISRANA) are cleaved as a signal peptide. Intrachain disulfides connect Cys39–Cys71 and Cys121–Cys151. N-linked (GlcNAc...) asparagine glycosylation occurs at Asn42. Asp149 functions as the Nucleophile in the catalytic mechanism. N-linked (GlcNAc...) asparagine glycosylation is found at Asn177 and Asn192. Substrate is bound at residue 222–226 (NWGNA). The Proton donor role is filled by Asp244. Asn395 carries N-linked (GlcNAc...) asparagine glycosylation.

This sequence belongs to the glycosyl hydrolase 27 family.

It localises to the secreted. It catalyses the reaction Hydrolysis of terminal, non-reducing alpha-D-galactose residues in alpha-D-galactosides, including galactose oligosaccharides, galactomannans and galactolipids.. Its function is as follows. Hydrolyzes a variety of simple alpha-D-galactoside as well as more complex molecules such as oligosaccharides and polysaccharides. This is Probable alpha-galactosidase B (aglB) from Emericella nidulans (strain FGSC A4 / ATCC 38163 / CBS 112.46 / NRRL 194 / M139) (Aspergillus nidulans).